The following is a 198-amino-acid chain: Cell division protein SepF (198 aa).

Residues 170–198 are disordered; that stretch reads EVPQPPARPARPASTNPPAWGNETNRMAQ. Low complexity predominate over residues 179 to 188; sequence ARPASTNPPA.

The protein belongs to the SepF family. Homodimer. Interacts with FtsZ.

It is found in the cytoplasm. Its function is as follows. Cell division protein that is part of the divisome complex and is recruited early to the Z-ring. Probably stimulates Z-ring formation, perhaps through the cross-linking of FtsZ protofilaments. Its function overlaps with FtsA. The polypeptide is Cell division protein SepF (Nostoc sp. (strain PCC 7120 / SAG 25.82 / UTEX 2576)).